Reading from the N-terminus, the 294-residue chain is ATP synthase gamma chain (294 aa).

The protein belongs to the ATPase gamma chain family. F-type ATPases have 2 components, CF(1) - the catalytic core - and CF(0) - the membrane proton channel. CF(1) has five subunits: alpha(3), beta(3), gamma(1), delta(1), epsilon(1). CF(0) has three main subunits: a, b and c.

The protein localises to the cell inner membrane. Functionally, produces ATP from ADP in the presence of a proton gradient across the membrane. The gamma chain is believed to be important in regulating ATPase activity and the flow of protons through the CF(0) complex. This chain is ATP synthase gamma chain, found in Nitratiruptor sp. (strain SB155-2).